Here is a 215-residue protein sequence, read N- to C-terminus: Abscisic acid receptor PYL6 (215 aa).

The segment at 54 to 209 (HVVGPSQCFS…NLQSLAKLAE (156 aa)) is START-like. C61 and C190 are disulfide-bonded. Abscisate contacts are provided by residues K90, 120–125 (AAFSLE), 147–153 (RLMNYKS), and E174. Residues 116–120 (SGLPA) carry the Gate loop motif. A Latch loop motif is present at residues 146-148 (HRL).

It belongs to the PYR/PYL/RCAR abscisic acid intracellular receptor family. As to quaternary structure, monomer. Homodimer. Binds ABA on one subunit only. Interacts with HAB1, ABI1 and ABI2, and possibly with other PP2Cs. Binds to CARs protein in an ABA-independent manner, both at the plasma membrane and in the nucleus. Interacts directly with CAR1 and CAR4. Interacts with MYC2 in the nucleus. Interaction with MYC2 is increased in the presence of abscisic acid.

The protein resides in the cytoplasm. Its subcellular location is the nucleus. It is found in the cell membrane. In terms of biological role, receptor for abscisic acid (ABA) required for ABA-mediated responses such as stomatal closure and germination inhibition. Inhibits the activity of group-A protein phosphatases type 2C (PP2Cs) in an ABA-independent manner but more efficiently when activated by ABA. Can be activated by both (-)-ABA and (+)-ABA. May link ABA and jasmonate signaling pathways by modifying MYC2 transcriptional activity, and regulation of JAZ6 and JAZ8 gene expression by MYC2. The polypeptide is Abscisic acid receptor PYL6 (PYL6) (Arabidopsis thaliana (Mouse-ear cress)).